A 276-amino-acid chain; its full sequence is F-box/LRR-repeat protein 20 (276 aa).

The F-box domain maps to 22–68 (AVINKKLPKELLLRIFSFLDVVTLCRCAQVSRAWNVLALDGSNWQRI). LRR repeat units follow at residues 74–100 (QRDIEGRVVENISKRCGGFLRKLSLRG), 101–126 (CLGVGDNALRTFAQNCRNIEVLSLNG), 127–152 (CTKTTDATCTSLSKFCSKLRHLDLAS), 153–178 (CTSITNMSLKALSEGCPLLEQLNISW), 179–204 (CDQVTKDGIQALVRGCGGLKALFLKG), 205–230 (CTQLEDEALKYIGAHCPELVTLNLQT), 231–256 (CLQITDEGLITICRGCHKLQSLCASG), and 257–276 (CSNITDAILNALGQNCPRLR).

In terms of assembly, interacts with SKP1 and CUL1. In terms of tissue distribution, widely expressed, with highest expression in skeletal muscle, heart and brain.

The protein resides in the cytoplasm. Substrate-recognition component of the SCF (SKP1-CUL1-F-box protein)-type E3 ubiquitin ligase complex. Role in neural transmission. The protein is F-box/LRR-repeat protein 20 (Fbxl20) of Rattus norvegicus (Rat).